The following is a 227-amino-acid chain: Cytochrome c oxidase subunit 2 (227 aa).

Residues 1 to 14 (MAYPFQLGFQDATS) lie on the Mitochondrial intermembrane side of the membrane. Residues 15–45 (PIMEELLHFHDHALMIVFLISSLVLYLISVM) form a helical membrane-spanning segment. Topologically, residues 46 to 59 (LTTSLTHTSTMDAQ) are mitochondrial matrix. A helical membrane pass occupies residues 60–87 (EVETIWTILPAMILIMIALPSLRILYMM). Residues 88-227 (DEINNPYLTV…YFEKWSSSML (140 aa)) lie on the Mitochondrial intermembrane side of the membrane. Cu cation-binding residues include H161, C196, E198, C200, H204, and M207. Residue E198 participates in Mg(2+) binding. Position 218 is a phosphotyrosine (Y218).

It belongs to the cytochrome c oxidase subunit 2 family. In terms of assembly, component of the cytochrome c oxidase (complex IV, CIV), a multisubunit enzyme composed of 14 subunits. The complex is composed of a catalytic core of 3 subunits MT-CO1, MT-CO2 and MT-CO3, encoded in the mitochondrial DNA, and 11 supernumerary subunits COX4I, COX5A, COX5B, COX6A, COX6B, COX6C, COX7A, COX7B, COX7C, COX8 and NDUFA4, which are encoded in the nuclear genome. The complex exists as a monomer or a dimer and forms supercomplexes (SCs) in the inner mitochondrial membrane with NADH-ubiquinone oxidoreductase (complex I, CI) and ubiquinol-cytochrome c oxidoreductase (cytochrome b-c1 complex, complex III, CIII), resulting in different assemblies (supercomplex SCI(1)III(2)IV(1) and megacomplex MCI(2)III(2)IV(2)). Found in a complex with TMEM177, COA6, COX18, COX20, SCO1 and SCO2. Interacts with TMEM177 in a COX20-dependent manner. Interacts with COX20. Interacts with COX16. Cu cation is required as a cofactor.

Its subcellular location is the mitochondrion inner membrane. The catalysed reaction is 4 Fe(II)-[cytochrome c] + O2 + 8 H(+)(in) = 4 Fe(III)-[cytochrome c] + 2 H2O + 4 H(+)(out). Functionally, component of the cytochrome c oxidase, the last enzyme in the mitochondrial electron transport chain which drives oxidative phosphorylation. The respiratory chain contains 3 multisubunit complexes succinate dehydrogenase (complex II, CII), ubiquinol-cytochrome c oxidoreductase (cytochrome b-c1 complex, complex III, CIII) and cytochrome c oxidase (complex IV, CIV), that cooperate to transfer electrons derived from NADH and succinate to molecular oxygen, creating an electrochemical gradient over the inner membrane that drives transmembrane transport and the ATP synthase. Cytochrome c oxidase is the component of the respiratory chain that catalyzes the reduction of oxygen to water. Electrons originating from reduced cytochrome c in the intermembrane space (IMS) are transferred via the dinuclear copper A center (CU(A)) of subunit 2 and heme A of subunit 1 to the active site in subunit 1, a binuclear center (BNC) formed by heme A3 and copper B (CU(B)). The BNC reduces molecular oxygen to 2 water molecules using 4 electrons from cytochrome c in the IMS and 4 protons from the mitochondrial matrix. In Rousettus leschenaultii (Leschenault's rousette), this protein is Cytochrome c oxidase subunit 2 (MT-CO2).